Reading from the N-terminus, the 391-residue chain is Succinyl-diaminopimelate desuccinylase (391 aa).

Residue histidine 78 coordinates Zn(2+). Residue aspartate 80 is part of the active site. Residue aspartate 111 coordinates Zn(2+). Glutamate 145 acts as the Proton acceptor in catalysis. Glutamate 146, glutamate 174, and histidine 360 together coordinate Zn(2+).

The protein belongs to the peptidase M20A family. DapE subfamily. In terms of assembly, homodimer. It depends on Zn(2+) as a cofactor. Co(2+) serves as cofactor.

The enzyme catalyses N-succinyl-(2S,6S)-2,6-diaminopimelate + H2O = (2S,6S)-2,6-diaminopimelate + succinate. It functions in the pathway amino-acid biosynthesis; L-lysine biosynthesis via DAP pathway; LL-2,6-diaminopimelate from (S)-tetrahydrodipicolinate (succinylase route): step 3/3. In terms of biological role, catalyzes the hydrolysis of N-succinyl-L,L-diaminopimelic acid (SDAP), forming succinate and LL-2,6-diaminopimelate (DAP), an intermediate involved in the bacterial biosynthesis of lysine and meso-diaminopimelic acid, an essential component of bacterial cell walls. In Acidovorax ebreus (strain TPSY) (Diaphorobacter sp. (strain TPSY)), this protein is Succinyl-diaminopimelate desuccinylase.